The chain runs to 328 residues: Probable transcription factor At4g00610 (328 aa).

The interval 31 to 143 is disordered; that stretch reads AKNKTLVTPS…ERAKTETETG (113 aa). Residues 35–54 are compositionally biased toward polar residues; it reads TLVTPSTVKKSSDVASTSKK. The span at 84–108 shows a compositional bias: acidic residues; it reads SEEEEEDEPSSDSESGSESESDTEA. Positions 122-143 are enriched in basic and acidic residues; that stretch reads NEKRQSEGKPEEERAKTETETG.

Belongs to the GeBP family.

The chain is Probable transcription factor At4g00610 from Arabidopsis thaliana (Mouse-ear cress).